Reading from the N-terminus, the 307-residue chain is 1-phosphofructokinase (307 aa).

ATP is bound by residues 217–222 and 249–250; these read SMGSDG and GD. Asp250 serves as the catalytic Proton acceptor.

This sequence belongs to the carbohydrate kinase PfkB family.

The catalysed reaction is beta-D-fructose 1-phosphate + ATP = beta-D-fructose 1,6-bisphosphate + ADP + H(+). Its function is as follows. Catalyzes the ATP-dependent phosphorylation of fructose-l-phosphate to fructose-l,6-bisphosphate. This Borreliella burgdorferi (strain ATCC 35210 / DSM 4680 / CIP 102532 / B31) (Borrelia burgdorferi) protein is 1-phosphofructokinase (fruK).